The following is a 341-amino-acid chain: Retinol dehydrogenase 10 (341 aa).

Residues 3-23 traverse the membrane as a helical; Signal-anchor segment; it reads IVVEFFVVTFKVLWAFVLAAA. 40–64 lines the NADP(+) pocket; that stretch reads LITGAGSGLGRLFALEFARRRALLV. Residue S197 coordinates substrate. Catalysis depends on Y210, which acts as the Proton acceptor.

Belongs to the short-chain dehydrogenases/reductases (SDR) family. In terms of tissue distribution, detected in retinal pigment epithelium (at protein level). Detected in retina, retinal pigment epithelium, and at lower levels in cornea, liver, kidney, pancreas, lung, brain and skeletal muscle.

Its subcellular location is the microsome membrane. The protein resides in the endoplasmic reticulum membrane. It carries out the reaction all-trans-retinol + NADP(+) = all-trans-retinal + NADPH + H(+). Its pathway is cofactor metabolism; retinol metabolism. Its function is as follows. Retinol dehydrogenase with a clear preference for NADP. Converts all-trans-retinol to all-trans-retinal. Has no detectable activity towards 11-cis-retinol, 9-cis-retinol and 13-cis-retinol. In Bos taurus (Bovine), this protein is Retinol dehydrogenase 10 (RDH10).